Consider the following 148-residue polypeptide: FAD synthase (148 aa).

ATP contacts are provided by residues 14-15 (VF), 19-22 (HVGH), and Asp100.

It belongs to the archaeal FAD synthase family. In terms of assembly, homodimer. A divalent metal cation serves as cofactor.

It catalyses the reaction FMN + ATP + H(+) = FAD + diphosphate. The protein operates within cofactor biosynthesis; FAD biosynthesis; FAD from FMN: step 1/1. In terms of biological role, catalyzes the transfer of the AMP portion of ATP to flavin mononucleotide (FMN) to produce flavin adenine dinucleotide (FAD) coenzyme. The polypeptide is FAD synthase (Pyrococcus abyssi (strain GE5 / Orsay)).